The chain runs to 578 residues: Penicillin-binding protein activator LpoA (578 aa).

A signal peptide spans 1 to 30 (MPTILVQSYGFRQKMKTIFIPTALALLLAA). Cysteine 31 carries N-palmitoyl cysteine lipidation. Residue cysteine 31 is the site of S-diacylglycerol cysteine attachment.

The protein belongs to the LpoA family. As to quaternary structure, interacts with PBP1a.

Its subcellular location is the cell outer membrane. Its function is as follows. Regulator of peptidoglycan synthesis that is essential for the function of penicillin-binding protein 1A (PBP1a). This is Penicillin-binding protein activator LpoA from Glaesserella parasuis serovar 5 (strain SH0165) (Haemophilus parasuis).